The following is a 739-amino-acid chain: Thiamine biosynthesis multifunctional protein ThiED (739 aa).

Residues 1-210 (MTDFSLYLVT…PSPAEAAREL (210 aa)) form a thiamine-phosphate synthase region. 4-amino-2-methyl-5-(diphosphooxymethyl)pyrimidine-binding positions include 37 to 41 (QLRDK) and N69. Residues D70 and D88 each contribute to the Mg(2+) site. T107 serves as a coordination point for 4-amino-2-methyl-5-(diphosphooxymethyl)pyrimidine. Position 140 to 142 (140 to 142 (TDT)) interacts with 2-[(2R,5Z)-2-carboxy-4-methylthiazol-5(2H)-ylidene]ethyl phosphate. K143 lines the 4-amino-2-methyl-5-(diphosphooxymethyl)pyrimidine pocket. Residues G174 and 194 to 195 (VS) contribute to the 2-[(2R,5Z)-2-carboxy-4-methylthiazol-5(2H)-ylidene]ethyl phosphate site. Positions 226 to 481 (LTIAGTDPTG…GSGSGPVDHF (256 aa)) are hydroxymethylpyrimidine/phosphomethylpyrimidine kinase. Q263 serves as a coordination point for 4-amino-5-hydroxymethyl-2-methylpyrimidine. The thiaminase-2 stretch occupies residues 527 to 739 (YTRALWEATG…FDQATRQGWN (213 aa)).

The protein in the N-terminal section; belongs to the thiamine-phosphate synthase family. In the central section; belongs to the ThiD family. This sequence in the C-terminal section; belongs to the thiaminase-2 family. Mg(2+) is required as a cofactor.

It carries out the reaction 2-[(2R,5Z)-2-carboxy-4-methylthiazol-5(2H)-ylidene]ethyl phosphate + 4-amino-2-methyl-5-(diphosphooxymethyl)pyrimidine + 2 H(+) = thiamine phosphate + CO2 + diphosphate. The catalysed reaction is 2-(2-carboxy-4-methylthiazol-5-yl)ethyl phosphate + 4-amino-2-methyl-5-(diphosphooxymethyl)pyrimidine + 2 H(+) = thiamine phosphate + CO2 + diphosphate. The enzyme catalyses 4-methyl-5-(2-phosphooxyethyl)-thiazole + 4-amino-2-methyl-5-(diphosphooxymethyl)pyrimidine + H(+) = thiamine phosphate + diphosphate. It catalyses the reaction 4-amino-5-hydroxymethyl-2-methylpyrimidine + ATP = 4-amino-2-methyl-5-(phosphooxymethyl)pyrimidine + ADP + H(+). It carries out the reaction 4-amino-2-methyl-5-(phosphooxymethyl)pyrimidine + ATP = 4-amino-2-methyl-5-(diphosphooxymethyl)pyrimidine + ADP. It functions in the pathway cofactor biosynthesis; thiamine diphosphate biosynthesis; 4-amino-2-methyl-5-diphosphomethylpyrimidine from 5-amino-1-(5-phospho-D-ribosyl)imidazole: step 3/3. It participates in cofactor biosynthesis; thiamine diphosphate biosynthesis; thiamine phosphate from 4-amino-2-methyl-5-diphosphomethylpyrimidine and 4-methyl-5-(2-phosphoethyl)-thiazole: step 1/1. Functionally, condenses 4-methyl-5-(beta-hydroxyethyl)thiazole monophosphate (THZ-P) and 2-methyl-4-amino-5-hydroxymethyl pyrimidine pyrophosphate (HMP-PP) to form thiamine monophosphate (TMP). Catalyzes the phosphorylation of hydroxymethylpyrimidine phosphate (HMP-P) to HMP-PP, and of HMP to HMP-P. The polypeptide is Thiamine biosynthesis multifunctional protein ThiED (thiED) (Corynebacterium efficiens (strain DSM 44549 / YS-314 / AJ 12310 / JCM 11189 / NBRC 100395)).